Reading from the N-terminus, the 422-residue chain is Enolase (422 aa).

Residue glutamine 161 coordinates (2R)-2-phosphoglycerate. Residue glutamate 203 is the Proton donor of the active site. Residues aspartate 240, glutamate 283, and aspartate 310 each coordinate Mg(2+). Residues lysine 335, arginine 364, serine 365, and lysine 386 each contribute to the (2R)-2-phosphoglycerate site. The active-site Proton acceptor is lysine 335.

This sequence belongs to the enolase family. The cofactor is Mg(2+).

Its subcellular location is the cytoplasm. The protein resides in the secreted. It is found in the cell surface. The catalysed reaction is (2R)-2-phosphoglycerate = phosphoenolpyruvate + H2O. The protein operates within carbohydrate degradation; glycolysis; pyruvate from D-glyceraldehyde 3-phosphate: step 4/5. Catalyzes the reversible conversion of 2-phosphoglycerate (2-PG) into phosphoenolpyruvate (PEP). It is essential for the degradation of carbohydrates via glycolysis. The sequence is that of Enolase from Deinococcus deserti (strain DSM 17065 / CIP 109153 / LMG 22923 / VCD115).